The primary structure comprises 689 residues: MTTQNFLAEIGTEELPPKALKKLATAFAENVENELNQADLSFEKVEWFAAPRRLAVKALGLATAQPSKEIEKRGPAVSAAFDADGKPTKAAEGWARGCGITVDQADRIATDKGEWLVHRAVIEGQPTKNLLVDIISRSLANLPIPKMMRWGDKTEQFVRPVHTVTLFFGSELIEGEILGVKINNVIRGHRFLGEREFTISHADEYLTALREKGMVVADFNERKALILAKSQEKATALGGVADIEEDLLDEVTSLVEFPNVLTAKFEERFLAVPAEALVYTMKGDQKYFPIYDKDGKLLPHFIFVSNINPEDPTAIIEGNEKVVRPRLTDAEFFFKTDLKQRLEDRLPRLETVLFQQQLGTLRDKTARIEALAGEIAAQIGADKAKAERAGLLSKCDLMTNMVFEFTDTQGVMGMHYARHDGEDEEVAVALNEQYMPRFAGDELPKSLVACSVALADKFDTLTGIFGIGQAPKGSADPFALRRAALGSLRIIVEKNLPLDLEDLVRKSAALFGNKLTNANVVEDVVDFMLGRFRAWYQDEGIAVDVIQAVLARRPTKPADFDARVRAVSHFRTLDSAEALAAANKRVSNILAKVEGEISIEIDRTLLVEAEEKALAEQVISLQTELAPTFANGEYQTALDRLASLRETVDNFFEKVMVNAEDANLRRNRQAILNNLRNLFLQVADISVLQ.

Belongs to the class-II aminoacyl-tRNA synthetase family. Tetramer of two alpha and two beta subunits.

The protein localises to the cytoplasm. The catalysed reaction is tRNA(Gly) + glycine + ATP = glycyl-tRNA(Gly) + AMP + diphosphate. This is Glycine--tRNA ligase beta subunit from Actinobacillus pleuropneumoniae serotype 5b (strain L20).